Here is a 352-residue protein sequence, read N- to C-terminus: Inorganic triphosphatase (352 aa).

Residues 6 to 203 (LQEIELKLAI…KRGYLLGSKQ (198 aa)) form the CYTH domain.

It carries out the reaction triphosphate + H2O = phosphate + diphosphate. Its function is as follows. Involved in the hydrolysis of the beta-gamma-phosphoanhydride linkage of triphosphate-containing substrates (inorganic or nucleoside-linked). Catalyzes the hydrolysis of inorganic triphosphate (PPPi), which could be cytotoxic because of its high affinity for calcium ion, thereby interfering with calcium signaling. In Haemophilus influenzae (strain ATCC 51907 / DSM 11121 / KW20 / Rd), this protein is Inorganic triphosphatase.